A 548-amino-acid polypeptide reads, in one-letter code: 4-coumarate--CoA ligase CCL1 (548 aa).

Residues 195-203 (SSGTTGLPK), 337-342 (QGYGMT), aspartate 426, 438-441 (IVDR), and lysine 532 each bind ATP. An SBD1 region spans residues 268–337 (EISKLLELIE…EKLPHAKLGQ (70 aa)). The segment at 338–405 (GYGMTEAGPV…IRGKQIMKGY (68 aa)) is SBD2.

This sequence belongs to the ATP-dependent AMP-binding enzyme family. In terms of tissue distribution, mostly expressed in glandular trichomes (lupulin glands) after flowering, and, to a lower extent, in stems, leaves, cones and flowers.

The protein resides in the cytoplasm. The catalysed reaction is (E)-4-coumarate + ATP + CoA = (E)-4-coumaroyl-CoA + AMP + diphosphate. It functions in the pathway secondary metabolite biosynthesis. Functionally, involved in the biosynthesis of prenylated phenolics natural products which contribute to the bitter taste of beer and display broad biological activities. Catalyzes the ligation of CoA on (E)-4-coumarate to produce (E)-4-coumaroyl-CoA. This is 4-coumarate--CoA ligase CCL1 from Humulus lupulus (European hop).